The sequence spans 394 residues: Probable aspartate/prephenate aminotransferase (394 aa).

L-aspartate-binding residues include glycine 40, tryptophan 126, and asparagine 176. Position 239 is an N6-(pyridoxal phosphate)lysine (lysine 239). Position 370 (arginine 370) interacts with L-aspartate.

Belongs to the class-I pyridoxal-phosphate-dependent aminotransferase family. Homodimer. Requires pyridoxal 5'-phosphate as cofactor.

The protein resides in the cytoplasm. It catalyses the reaction L-aspartate + 2-oxoglutarate = oxaloacetate + L-glutamate. The catalysed reaction is L-arogenate + oxaloacetate = prephenate + L-aspartate. Catalyzes the reversible conversion of aspartate and 2-oxoglutarate to glutamate and oxaloacetate. Can also transaminate prephenate in the presence of aspartate. This is Probable aspartate/prephenate aminotransferase (aspC) from Aquifex aeolicus (strain VF5).